The following is a 610-amino-acid chain: Elongation factor 4 (610 aa).

Residues 11–193 form the tr-type G domain; the sequence is ENIRNFSIIA…QIVEKVPAPS (183 aa). GTP-binding positions include 23–28 and 140–143; these read DHGKST and NKID.

The protein belongs to the TRAFAC class translation factor GTPase superfamily. Classic translation factor GTPase family. LepA subfamily.

Its subcellular location is the cell membrane. The enzyme catalyses GTP + H2O = GDP + phosphate + H(+). Functionally, required for accurate and efficient protein synthesis under certain stress conditions. May act as a fidelity factor of the translation reaction, by catalyzing a one-codon backward translocation of tRNAs on improperly translocated ribosomes. Back-translocation proceeds from a post-translocation (POST) complex to a pre-translocation (PRE) complex, thus giving elongation factor G a second chance to translocate the tRNAs correctly. Binds to ribosomes in a GTP-dependent manner. The protein is Elongation factor 4 of Streptococcus equi subsp. zooepidemicus (strain MGCS10565).